The primary structure comprises 339 residues: Centrosomal protein of 41 kDa (339 aa).

A disordered region spans residues 56-99 (RLEDSDSATSEADTDIAAKTNGKGSPEEQSPSPVQFINSTGAGD). Phosphoserine occurs at positions 62 and 65. The segment covering 62 to 73 (SATSEADTDIAA) has biased composition (low complexity). Residue threonine 75 is modified to Phosphothreonine. 2 positions are modified to phosphoserine: serine 80 and serine 87. A compositionally biased stretch (polar residues) spans 82-99 (EEQSPSPVQFINSTGAGD). A Rhodanese domain is found at 135–232 (PDCPFLLLDV…LAQKFPEGLV (98 aa)). Residues 283–339 (DQGPANNPSRLNQNNSAGRDLKVPAGRGGQNLPTGCPTSHSNSRTLNSGHLQGKPWK) are disordered. Over residues 286 to 299 (PANNPSRLNQNNSA) the composition is skewed to polar residues. Residue arginine 309 is modified to Omega-N-methylarginine. Polar residues predominate over residues 313–332 (NLPTGCPTSHSNSRTLNSGH).

Belongs to the CEP41 family. In terms of assembly, found in a complex with TTLL6.

The protein localises to the cytoplasm. It localises to the cytoskeleton. The protein resides in the microtubule organizing center. Its subcellular location is the centrosome. It is found in the cell projection. The protein localises to the cilium. It localises to the cilium basal body. In terms of biological role, required during ciliogenesis for tubulin glutamylation in cilium. Probably acts by participating in the transport of TTLL6, a tubulin polyglutamylase, between the basal body and the cilium. This is Centrosomal protein of 41 kDa (Cep41) from Rattus norvegicus (Rat).